The primary structure comprises 261 residues: uncharacterized protein (261 aa).

The N-terminal stretch at 1 to 22 (MRDSKRVVLYISIIVLSIFIIG) is a signal peptide. Residue Cys-23 is the site of N-palmitoyl cysteine attachment. Cys-23 carries the S-diacylglycerol cysteine lipid modification.

This sequence belongs to the staphylococcal tandem lipoprotein family.

The protein resides in the cell membrane. This is an uncharacterized protein from Staphylococcus aureus (strain Mu50 / ATCC 700699).